Consider the following 272-residue polypeptide: Tryptophan synthase alpha chain (272 aa).

Catalysis depends on proton acceptor residues E49 and D60.

The protein belongs to the TrpA family. In terms of assembly, tetramer of two alpha and two beta chains.

It catalyses the reaction (1S,2R)-1-C-(indol-3-yl)glycerol 3-phosphate + L-serine = D-glyceraldehyde 3-phosphate + L-tryptophan + H2O. The protein operates within amino-acid biosynthesis; L-tryptophan biosynthesis; L-tryptophan from chorismate: step 5/5. The alpha subunit is responsible for the aldol cleavage of indoleglycerol phosphate to indole and glyceraldehyde 3-phosphate. This Acidithiobacillus ferrooxidans (strain ATCC 23270 / DSM 14882 / CIP 104768 / NCIMB 8455) (Ferrobacillus ferrooxidans (strain ATCC 23270)) protein is Tryptophan synthase alpha chain.